The chain runs to 309 residues: Beta-ketoacyl-[acyl-carrier-protein] synthase III (309 aa).

Active-site residues include cysteine 111 and histidine 236. The tract at residues 237-241 (QANVR) is ACP-binding. Residue asparagine 266 is part of the active site.

The protein belongs to the thiolase-like superfamily. FabH family. In terms of assembly, homodimer.

The protein localises to the cytoplasm. The catalysed reaction is malonyl-[ACP] + acetyl-CoA + H(+) = 3-oxobutanoyl-[ACP] + CO2 + CoA. It functions in the pathway lipid metabolism; fatty acid biosynthesis. In terms of biological role, catalyzes the condensation reaction of fatty acid synthesis by the addition to an acyl acceptor of two carbons from malonyl-ACP. Catalyzes the first condensation reaction which initiates fatty acid synthesis and may therefore play a role in governing the total rate of fatty acid production. Possesses both acetoacetyl-ACP synthase and acetyl transacylase activities. Its substrate specificity determines the biosynthesis of branched-chain and/or straight-chain of fatty acids. The protein is Beta-ketoacyl-[acyl-carrier-protein] synthase III of Aquifex aeolicus (strain VF5).